Here is a 147-residue protein sequence, read N- to C-terminus: Ribosome maturation factor RimP (147 aa).

The protein belongs to the RimP family.

It localises to the cytoplasm. Its function is as follows. Required for maturation of 30S ribosomal subunits. The polypeptide is Ribosome maturation factor RimP (Sulfurihydrogenibium sp. (strain YO3AOP1)).